The sequence spans 322 residues: uncharacterized protein (322 aa).

This is an uncharacterized protein from Aquifex aeolicus (strain VF5).